The chain runs to 213 residues: Kynurenine formamidase (213 aa).

W18 lines the substrate pocket. Residues H48, H52, and D54 each contribute to the Zn(2+) site. Residue H58 is the Proton donor/acceptor of the active site. The Zn(2+) site is built by H160 and E172.

This sequence belongs to the Cyclase 1 superfamily. KynB family. In terms of assembly, homodimer. Zn(2+) is required as a cofactor.

It carries out the reaction N-formyl-L-kynurenine + H2O = L-kynurenine + formate + H(+). Its pathway is amino-acid degradation; L-tryptophan degradation via kynurenine pathway; L-kynurenine from L-tryptophan: step 2/2. In terms of biological role, catalyzes the hydrolysis of N-formyl-L-kynurenine to L-kynurenine, the second step in the kynurenine pathway of tryptophan degradation. The protein is Kynurenine formamidase of Burkholderia thailandensis (strain ATCC 700388 / DSM 13276 / CCUG 48851 / CIP 106301 / E264).